Reading from the N-terminus, the 706-residue chain is SPX domain-containing membrane protein Os09g0521800 (706 aa).

The region spanning V2–R145 is the SPX domain. The next 6 helical transmembrane spans lie at M251–V271, L281–F301, L318–L338, S340–V359, A378–L398, and L414–F434. Positions S475–T498 are disordered. A compositionally biased stretch (acidic residues) spans E476 to H488. 5 helical membrane-spanning segments follow: residues L520–V540, V554–I574, I583–V603, V611–L631, and L678–L698.

It belongs to the major facilitator superfamily.

Its subcellular location is the membrane. This is SPX domain-containing membrane protein Os09g0521800 from Oryza sativa subsp. japonica (Rice).